The sequence spans 282 residues: Bifunctional protein FolD (282 aa).

Residues Asn-165–Ser-167, Ser-190, and Ile-231 contribute to the NADP(+) site.

This sequence belongs to the tetrahydrofolate dehydrogenase/cyclohydrolase family. As to quaternary structure, homodimer.

It catalyses the reaction (6R)-5,10-methylene-5,6,7,8-tetrahydrofolate + NADP(+) = (6R)-5,10-methenyltetrahydrofolate + NADPH. The catalysed reaction is (6R)-5,10-methenyltetrahydrofolate + H2O = (6R)-10-formyltetrahydrofolate + H(+). It participates in one-carbon metabolism; tetrahydrofolate interconversion. Catalyzes the oxidation of 5,10-methylenetetrahydrofolate to 5,10-methenyltetrahydrofolate and then the hydrolysis of 5,10-methenyltetrahydrofolate to 10-formyltetrahydrofolate. This chain is Bifunctional protein FolD, found in Clostridium botulinum (strain Kyoto / Type A2).